A 902-amino-acid chain; its full sequence is DNA mismatch repair protein MutS (902 aa).

647–654 provides a ligand contact to ATP; the sequence is GPNMGGKS.

This sequence belongs to the DNA mismatch repair MutS family.

In terms of biological role, this protein is involved in the repair of mismatches in DNA. It is possible that it carries out the mismatch recognition step. This protein has a weak ATPase activity. This chain is DNA mismatch repair protein MutS, found in Nitrosospira multiformis (strain ATCC 25196 / NCIMB 11849 / C 71).